Reading from the N-terminus, the 202-residue chain is GMP synthase [glutamine-hydrolyzing] subunit A (202 aa).

A Glutamine amidotransferase type-1 domain is found at 4–194 (KIYVVDNGGQ…IAICQQHKEK (191 aa)). Cysteine 81 (nucleophile) is an active-site residue. Residues histidine 168 and glutamate 170 contribute to the active site.

As to quaternary structure, heterodimer composed of a glutamine amidotransferase subunit (A) and a GMP-binding subunit (B).

The catalysed reaction is XMP + L-glutamine + ATP + H2O = GMP + L-glutamate + AMP + diphosphate + 2 H(+). It participates in purine metabolism; GMP biosynthesis; GMP from XMP (L-Gln route): step 1/1. In terms of biological role, catalyzes the synthesis of GMP from XMP. The polypeptide is GMP synthase [glutamine-hydrolyzing] subunit A (Thermoplasma volcanium (strain ATCC 51530 / DSM 4299 / JCM 9571 / NBRC 15438 / GSS1)).